We begin with the raw amino-acid sequence, 1553 residues long: Mediator of RNA polymerase II transcription subunit 14 (1553 aa).

2 short sequence motifs (LXXLL motif) span residues 55–59 (LAELL) and 472–476 (LPALL). A Phosphoserine modification is found at Ser615. Disordered stretches follow at residues 699–723 (FATQ…GTSG), 1006–1199 (ASHE…LNRP), and 1513–1553 (GVGS…GGPQ). Residue Ser1015 is modified to Phosphoserine. Composition is skewed to low complexity over residues 1024-1039 (GGPS…GSSP) and 1065-1080 (PSSS…HPSA). Over residues 1081 to 1090 (GAGGGSGPQG) the composition is skewed to gly residues. Residues 1099-1108 (PPAPHMPHPS) are compositionally biased toward pro residues. Residues 1131–1155 (GPNTLYMQSHQDSPFTAMSPANNNW) are compositionally biased toward polar residues. Residues 1159–1169 (PSMPRPSPRPG) show a composition bias toward pro residues. The span at 1177 to 1193 (TGGGAGVAGGTDRGGSR) shows a compositional bias: gly residues. The span at 1515-1534 (GSSPNPMMPMQQLPQQVGPQ) shows a compositional bias: low complexity.

It belongs to the Mediator complex subunit 14 family. In terms of assembly, component of the Mediator complex, which may include CDK8, MED4, MED6, MED11, MED14, MED17, MED18, MED20, MED21, MED22, MED27, MED28, MED30 and MED31.

The protein localises to the nucleus. Functionally, component of the Mediator complex, a coactivator involved in the regulated transcription of nearly all RNA polymerase II-dependent genes. Mediator functions as a bridge to convey information from gene-specific regulatory proteins to the basal RNA polymerase II transcription machinery. Mediator is recruited to promoters by direct interactions with regulatory proteins and serves as a scaffold for the assembly of a functional pre-initiation complex with RNA polymerase II and the general transcription factors. Required for activated transcription of the MtnA, MtnB and MtnD genes. In Drosophila melanogaster (Fruit fly), this protein is Mediator of RNA polymerase II transcription subunit 14 (MED14).